Reading from the N-terminus, the 369-residue chain is Aminomethyltransferase (369 aa).

The protein belongs to the GcvT family. As to quaternary structure, the glycine cleavage system is composed of four proteins: P, T, L and H.

It catalyses the reaction N(6)-[(R)-S(8)-aminomethyldihydrolipoyl]-L-lysyl-[protein] + (6S)-5,6,7,8-tetrahydrofolate = N(6)-[(R)-dihydrolipoyl]-L-lysyl-[protein] + (6R)-5,10-methylene-5,6,7,8-tetrahydrofolate + NH4(+). Its function is as follows. The glycine cleavage system catalyzes the degradation of glycine. The protein is Aminomethyltransferase of Synechococcus sp. (strain WH7803).